The primary structure comprises 657 residues: Glycogen debranching enzyme (657 aa).

The active-site Nucleophile is Asp336. Glu371 acts as the Proton donor in catalysis. Residues 458-467 (NEANGEENRD) are compositionally biased toward basic and acidic residues. Positions 458 to 479 (NEANGEENRDGTNNNYSNNHGK) are disordered.

This sequence belongs to the glycosyl hydrolase 13 family.

The catalysed reaction is Hydrolysis of (1-&gt;6)-alpha-D-glucosidic linkages to branches with degrees of polymerization of three or four glucose residues in limit dextrin.. The protein operates within glycan degradation; glycogen degradation. Removes maltotriose and maltotetraose chains that are attached by 1,6-alpha-linkage to the limit dextrin main chain, generating a debranched limit dextrin. The polypeptide is Glycogen debranching enzyme (Shigella boydii serotype 18 (strain CDC 3083-94 / BS512)).